A 446-amino-acid polypeptide reads, in one-letter code: Delta(8)-fatty-acid desaturase (446 aa).

In terms of domain architecture, Cytochrome b5 heme-binding spans 5 to 89; that stretch reads KKYISVGELE…LEDYLVSEIS (85 aa). The heme site is built by histidine 40 and histidine 63. The next 2 helical transmembrane spans lie at 112 to 132 and 136 to 156; these read VIYC…GVLC and LWVH…AAYL. Positions 158–162 match the Histidine box-1 motif; it reads HDSGH. 4 helical membrane passes run 174–195, 253–273, 282–302, and 309–329; these read FAQV…KWTH, IYLV…LLLF, ALNI…VSCL, and VLFV…FTLN. The Histidine box-2 signature appears at 195 to 199; that stretch reads HNAHH. Residues 372–376 carry the Histidine box-3 motif; it reads QLEHH.

This sequence belongs to the fatty acid desaturase type 1 family. Requires Fe cation as cofactor. In terms of tissue distribution, expressed only in young leaves.

It is found in the membrane. The enzyme catalyses an N-acyl-(4R)-4-hydroxysphinganine + 2 Fe(II)-[cytochrome b5] + O2 + 2 H(+) = a (4R,8E)-4-hydroxysphingenine ceramide + 2 Fe(III)-[cytochrome b5] + 2 H2O. It carries out the reaction an N-acyl-(4R)-4-hydroxysphinganine + 2 Fe(II)-[cytochrome b5] + O2 + 2 H(+) = a (4R,8Z)-4-hydroxysphing-8-enine ceramide + 2 Fe(III)-[cytochrome b5] + 2 H2O. In terms of biological role, plays a major role as delta(8)-fatty-acid desaturase which introduces a double bond at the 8-position in the long-chain base (LCB) of ceramides with or without a hydroxy group at the 4-position. The enzyme produces both the 8E and 8Z isomers (in a 4:1 ratio). This structural modification contributes to the quantitative partitioning of ceramides between the two major sphingolipid classes, glucosylceramides and glycosylinositolphosphoryl ceramides. Sphingolipids are important membrane components involved in environmental stress responses, such as resistance to chilling, and act as cell signaling molecules. The polypeptide is Delta(8)-fatty-acid desaturase (sld1) (Borago officinalis (Bourrache)).